The sequence spans 375 residues: Queuine tRNA-ribosyltransferase (375 aa).

The active-site Proton acceptor is Asp89. Residues 89 to 93 (DSGGF), Asp143, Gln187, and Gly214 contribute to the substrate site. Residues 245-251 (GVGKPED) form an RNA binding region. Asp264 functions as the Nucleophile in the catalytic mechanism. An RNA binding; important for wobble base 34 recognition region spans residues 269-273 (TRNAR). Residues Cys302, Cys304, Cys307, and His333 each contribute to the Zn(2+) site.

This sequence belongs to the queuine tRNA-ribosyltransferase family. Homodimer. Within each dimer, one monomer is responsible for RNA recognition and catalysis, while the other monomer binds to the replacement base PreQ1. Requires Zn(2+) as cofactor.

The catalysed reaction is 7-aminomethyl-7-carbaguanine + guanosine(34) in tRNA = 7-aminomethyl-7-carbaguanosine(34) in tRNA + guanine. Its pathway is tRNA modification; tRNA-queuosine biosynthesis. Its function is as follows. Catalyzes the base-exchange of a guanine (G) residue with the queuine precursor 7-aminomethyl-7-deazaguanine (PreQ1) at position 34 (anticodon wobble position) in tRNAs with GU(N) anticodons (tRNA-Asp, -Asn, -His and -Tyr). Catalysis occurs through a double-displacement mechanism. The nucleophile active site attacks the C1' of nucleotide 34 to detach the guanine base from the RNA, forming a covalent enzyme-RNA intermediate. The proton acceptor active site deprotonates the incoming PreQ1, allowing a nucleophilic attack on the C1' of the ribose to form the product. After dissociation, two additional enzymatic reactions on the tRNA convert PreQ1 to queuine (Q), resulting in the hypermodified nucleoside queuosine (7-(((4,5-cis-dihydroxy-2-cyclopenten-1-yl)amino)methyl)-7-deazaguanosine). This Aliivibrio salmonicida (strain LFI1238) (Vibrio salmonicida (strain LFI1238)) protein is Queuine tRNA-ribosyltransferase.